The following is a 429-amino-acid chain: Adenylosuccinate synthetase (429 aa).

GTP-binding positions include 12 to 18 (GDEGKGK) and 40 to 42 (GHT). The active-site Proton acceptor is Asp13. Asp13 and Gly40 together coordinate Mg(2+). IMP-binding positions include 13–16 (DEGK), 38–41 (NAGH), Thr128, Arg142, Gln223, Thr238, and Arg302. His41 functions as the Proton donor in the catalytic mechanism. Residue 298-304 (ATTGRKR) participates in substrate binding. GTP-binding positions include Arg304, 330–332 (KLD), and 412–414 (GTG).

Belongs to the adenylosuccinate synthetase family. Homodimer. The cofactor is Mg(2+).

The protein resides in the cytoplasm. It catalyses the reaction IMP + L-aspartate + GTP = N(6)-(1,2-dicarboxyethyl)-AMP + GDP + phosphate + 2 H(+). Its pathway is purine metabolism; AMP biosynthesis via de novo pathway; AMP from IMP: step 1/2. Its function is as follows. Plays an important role in the de novo pathway of purine nucleotide biosynthesis. Catalyzes the first committed step in the biosynthesis of AMP from IMP. The protein is Adenylosuccinate synthetase of Tropheryma whipplei (strain TW08/27) (Whipple's bacillus).